The chain runs to 474 residues: MLQAHTGYDLAIIGSGAGAFAAAIAARNKGRSVVMVERGTTGGTCVNVGCVPSKALLAAAEARHGAQAASRFPGIQATEPALDFPALISGKDTLVGQLRAEKYTDLAAEYGWQIVHGTATFADGPMLEVALNDGGTATVEAAHYLIATGSAPTAPHIDGLDQVDYLTSTTAMELQQLPEHLLILGGGYVGLEQAQLFARLGSRVTLAVRSRLASREEPEISAGIENIFREEGITVHTRTQLRAVRRDGEGILATLTGPDGDQQVRASHLLIATGRRSVTNGLGLERVGVKTGERGEVVVDEYLRTDNPRIWAAGDVTCHPDFVYVAAAHGTLVADNALDGAERTLDYTALPKVTFTSPAIASVGLTEAQLTEAGIAHQTRTLSLENVPRALVNRDTRGLVKLIAERGTGKLLAAHVLAEGAGDVITAATYAITAGLTVDQLARTWHPYLTMAEALKLAAQTFTSDVAKLSCCAG.

Residues Ala19, Gly39, and Thr44 each coordinate FAD. Cys45 and Cys50 form a disulfide bridge. FAD-binding residues include Lys54, Ala119, Asp315, and Val323. The Hg(2+) site is built by Cys471 and Cys472.

It belongs to the class-I pyridine nucleotide-disulfide oxidoreductase family. Homodimer. FAD is required as a cofactor.

It catalyses the reaction Hg + NADP(+) + H(+) = Hg(2+) + NADPH. In terms of biological role, resistance to Hg(2+) in bacteria appears to be governed by a specialized system which includes mercuric reductase. MerA protein is responsible for volatilizing mercury as Hg(0). This Streptomyces lividans protein is Mercuric reductase (merA).